A 1097-amino-acid chain; its full sequence is MPAEKEKKKHKLIDIAVELQVSLDDIRSFVEELGYRTTNSTKVTDSVKELILDNYSDEKKKSDLHKKLKAEKNRKIQLLEKRVSPQADKFSKKKTAAKKEASQEKADAHAKLEPSIPEEAPAAIDIDDTPEVAPEIEIPSQNTQEPEPVEMDEVASAATLAVEEAPIAAAPTEEPMHNSEAELPESKIDSAEAVAEEAAPEVEVHLEPKEQEVQELNHAEEAETPTTEASSEETSAVMTKEGDSNDAQPFTQHEPVSRKTQNTTNVSEENKQHEKQPETLKSDKAMDVVQPVPIAEETAEQQLTEASSYEKKETNLQGENLETNEADAAQTEAKDDDAQSDSLQAEISRQQNEISNRFSQSENIAGLKVFGEIELHKKKRKRKKNFREQAKDLKQQMTPEQPKQEEKPVKKEKPKEREKPAAGKKEQTPGKKPVREDQKERVLQDGPARVIKKKPKKAVDEKVVDRNIRQTMMTMDDTNDSSARQKFRKIRKRERLREQEIEAAAKEAESKVLKITEFASTHELADMLGVTPKEVIQKCFKLGKFITINQRLDKETIELLSLEFNYEVHFISDVEATEIDDDPDLPEDMKTRPPVVTIMGHVDHGKTSLLDYIRNSNVVAGESGGITQHMGAYEVTLENKQRLTFLDTPGHEAFTAMRARGAQVTDVVILVVAADDNVMPQTVEAINHAKAAEVPIIVAINKIDKPDANPEKIRTQLADIGVLVEDWGGSVQCQEISAKKGTGVRDLIDKVLVEAELLELKANYSEDKLSRGVVIEAELDKGKGVIATILVQTGIINVGMPFVAGGSSGRIRAMLDERGNRLETVYPSQPVRILGFEELPQAGDLFSIMPSDREAREIAQRRQVIRREHEFRHSSRVKLNDIAKQVQEGQVQELRVIIKADTDGSIQALADGLMKVQTDEVKVEVIHRGVGQITETDVLLAAASDAIIIGFRVRPNVNAKKLAEKEEIDIRFYSVIYHVLEDIHDALEGMLSPELQEKVTATVEIRDIFRISKIGNVAGCHVLDGKINRDSRVRLLRDGIQIYEGVLDSLKRHKDDVKEVDSGYDCGLTLKNYDDIKVNDIVESFETVETKRKLVVS.

The segment at 79-458 (LEKRVSPQAD…RVIKKKPKKA (380 aa)) is disordered. Basic and acidic residues predominate over residues 97–112 (AKKEASQEKADAHAKL). Low complexity predominate over residues 157–173 (AATLAVEEAPIAAAPTE). Basic and acidic residues-rich tracts occupy residues 174–190 (EPMH…KIDS) and 202–221 (VEVH…HAEE). Low complexity predominate over residues 224-236 (TPTTEASSEETSA). The segment covering 258–267 (RKTQNTTNVS) has biased composition (polar residues). The span at 268–286 (EENKQHEKQPETLKSDKAM) shows a compositional bias: basic and acidic residues. Over residues 340–363 (SDSLQAEISRQQNEISNRFSQSEN) the composition is skewed to polar residues. Residues 376–385 (HKKKRKRKKN) are compositionally biased toward basic residues. Residues 402 to 443 (PKQEEKPVKKEKPKEREKPAAGKKEQTPGKKPVREDQKERVL) are compositionally biased toward basic and acidic residues. The region spanning 591–761 (TRPPVVTIMG…LVEAELLELK (171 aa)) is the tr-type G domain. A G1 region spans residues 600-607 (GHVDHGKT). 600 to 607 (GHVDHGKT) provides a ligand contact to GTP. Residues 625–629 (GITQH) are G2. The G3 stretch occupies residues 647 to 650 (DTPG). Residues 647–651 (DTPGH) and 701–704 (NKID) each bind GTP. The tract at residues 701–704 (NKID) is G4. Residues 737–739 (SAK) are G5.

The protein belongs to the TRAFAC class translation factor GTPase superfamily. Classic translation factor GTPase family. IF-2 subfamily.

Its subcellular location is the cytoplasm. One of the essential components for the initiation of protein synthesis. Protects formylmethionyl-tRNA from spontaneous hydrolysis and promotes its binding to the 30S ribosomal subunits. Also involved in the hydrolysis of GTP during the formation of the 70S ribosomal complex. The polypeptide is Translation initiation factor IF-2 (Chloroherpeton thalassium (strain ATCC 35110 / GB-78)).